The following is a 198-amino-acid chain: Heat shock 70 kDa protein (198 aa).

Residues 170-191 (GGGVPSGMPGGMPGAGGGGGKG) show a composition bias toward gly residues. The disordered stretch occupies residues 170–198 (GGGVPSGMPGGMPGAGGGGGKGPTIEEVD).

The protein belongs to the heat shock protein 70 family.

This is Heat shock 70 kDa protein from Schistosoma japonicum (Blood fluke).